A 350-amino-acid chain; its full sequence is Transmembrane protein 115 (350 aa).

Residues 1–19 (MQRALPGARQHLGAILASA) lie on the Cytoplasmic side of the membrane. The tract at residues 1–205 (MQRALPGARQ…FGLLSSWVYL (205 aa)) is mediates homooligomerization. The helical transmembrane segment at 20 to 40 (SVVVKALCAVVLFLYLLSFAV) threads the bilayer. Residues 41-97 (DTGCLAVTPGYLFPPNFWIWTLATHGLMEQHVWDVAISLATVVVAGRLLEPLWGALE) are Lumenal-facing. The chain crosses the membrane as a helical span at residues 98 to 118 (LLIFFSVVNVSVGLLGALAYL). Residues 119-126 (LTYMASFN) lie on the Cytoplasmic side of the membrane. A helical transmembrane segment spans residues 127 to 147 (LVYLFTIRIHGALGFLGGVLV). The Lumenal segment spans residues 148 to 165 (ALKQTMGDCVVLRVPQVR). Residues 166 to 186 (VSVVPMLLLALLLLLRLATLL) form a helical membrane-spanning segment. The Cytoplasmic portion of the chain corresponds to 187–350 (QSPALASYGF…LITLETAPLL (164 aa)). The mediates localization to the Golgi stretch occupies residues 206–229 (RFYQRHSRGRGDMADHFAFATFFP). The segment at 299–350 (EDQSAWPSMDDDEEEAGAKTDSPLPLEEASTPPGKVTVPESSLITLETAPLL) is disordered. At Thr329 the chain carries Phosphothreonine.

It belongs to the TMEM115 family. Homooligomer. Interacts with COPB1. May interact with LMAN1. Interacts with the COG complex; probably through COG3.

It is found in the golgi apparatus. It localises to the golgi stack membrane. In terms of biological role, may play a role in retrograde transport of proteins from the Golgi to the endoplasmic reticulum. May indirectly play a role in protein glycosylation in the Golgi. The chain is Transmembrane protein 115 from Mus musculus (Mouse).